A 270-amino-acid chain; its full sequence is MSDLHNESIFITGGGSGLGLALVERFIEEGAQVATLELSAAKVASLRQRFGEHILAVEGNVTCYADYQRAVDQILTRSGKLDCFIGNAGIWDHNASLVNTPAETLETGFHELFNVNVLGYLLGAKACAPALIASEGSMIFTLSNAAWYPGGGGPLYTASKHAATGLIRQLAYELAPKVRVNGVGPCGMASDLRGPQALGQSETSIMQSLTPEKIAAILPLQFFPQPADFTGPYVMLTSRRNNRALSGVMINADAGLAIRGIRHVAAGLDL.

Position 10-34 (10-34 (FITGGGSGLGLALVERFIEEGAQVA)) interacts with NAD(+). Residue S143 coordinates substrate. Y156 acts as the Proton acceptor in catalysis.

It belongs to the short-chain dehydrogenases/reductases (SDR) family.

The enzyme catalyses 3-(cis-5,6-dihydroxycyclohexa-1,3-dien-1-yl)propanoate + NAD(+) = 3-(2,3-dihydroxyphenyl)propanoate + NADH + H(+). It catalyses the reaction (2E)-3-(cis-5,6-dihydroxycyclohexa-1,3-dien-1-yl)prop-2-enoate + NAD(+) = (2E)-3-(2,3-dihydroxyphenyl)prop-2-enoate + NADH + H(+). It participates in aromatic compound metabolism; 3-phenylpropanoate degradation. Its function is as follows. Converts 3-phenylpropionate-dihydrodiol (PP-dihydrodiol) and cinnamic acid-dihydrodiol (CI-dihydrodiol) into 3-(2,3-dihydroxylphenyl)propanoic acid (DHPP) and 2,3-dihydroxicinnamic acid (DHCI), respectively. The protein is 3-phenylpropionate-dihydrodiol/cinnamic acid-dihydrodiol dehydrogenase of Escherichia coli (strain K12 / MC4100 / BW2952).